The sequence spans 141 residues: Large ribosomal subunit protein mL42 (141 aa).

The N-terminal 31 residues, 1–31 (MTAAVKWAVSHRTIWRHLFPIQNGAISSACH), are a transit peptide targeting the mitochondrion.

Belongs to the mitochondrion-specific ribosomal protein mL42 family. In terms of assembly, component of the mitochondrial ribosome large subunit (39S) which comprises a 16S rRNA and about 50 distinct proteins. Component of the mitochondrial ribosome small subunit (28S) which comprises a 12S rRNA and about 30 distinct proteins.

The protein resides in the mitochondrion. The chain is Large ribosomal subunit protein mL42 (Mrpl42) from Rattus norvegicus (Rat).